The following is a 589-amino-acid chain: ABC transporter G family member 8 (589 aa).

The ABC transporter domain occupies 16-261 (LTTSSISYTI…LLFKGFTVPP (246 aa)). Residue 62 to 69 (GPSGAGKS) participates in ATP binding. The ABC transmembrane type-2 domain maps to 311 to 521 (TEISLLARRF…ALDALLINEY (211 aa)). A run of 7 helical transmembrane segments spans residues 335–355 (ALEA…IGIG), 365–385 (MFAF…PIFI), 412–432 (VFLP…YFLI), 441–461 (FGYF…FVLF), 470–490 (ITGT…SGYF), 499–519 (YWLF…LLIN), and 560–580 (FNVY…FLAL).

The protein belongs to the ABC transporter superfamily. ABCG family. Eye pigment precursor importer (TC 3.A.1.204) subfamily.

It is found in the membrane. This Arabidopsis thaliana (Mouse-ear cress) protein is ABC transporter G family member 8 (ABCG8).